The following is a 104-amino-acid chain: Large ribosomal subunit protein uL24 (104 aa).

The protein belongs to the universal ribosomal protein uL24 family. In terms of assembly, part of the 50S ribosomal subunit.

In terms of biological role, one of two assembly initiator proteins, it binds directly to the 5'-end of the 23S rRNA, where it nucleates assembly of the 50S subunit. Functionally, one of the proteins that surrounds the polypeptide exit tunnel on the outside of the subunit. This chain is Large ribosomal subunit protein uL24, found in Anaplasma phagocytophilum (strain HZ).